The sequence spans 548 residues: Membrane protein insertase YidC (548 aa).

The helical transmembrane segment at 6-26 threads the bilayer; that stretch reads NLLVIALLFVSFMIWQAWEQD. The segment at 28 to 55 is disordered; that stretch reads NPQPQAQQTTQTTTTAAGSAADQGVPAS. A compositionally biased stretch (low complexity) spans 30–50; it reads QPQAQQTTQTTTTAAGSAADQ. Transmembrane regions (helical) follow at residues 350-370, 420-440, 458-478, and 499-519; these read FVGN…GIMY, LGGC…YYML, LSAQ…MFFI, and PVIF…YYIV.

The protein belongs to the OXA1/ALB3/YidC family. Type 1 subfamily. In terms of assembly, interacts with the Sec translocase complex via SecD. Specifically interacts with transmembrane segments of nascent integral membrane proteins during membrane integration.

Its subcellular location is the cell inner membrane. In terms of biological role, required for the insertion and/or proper folding and/or complex formation of integral membrane proteins into the membrane. Involved in integration of membrane proteins that insert both dependently and independently of the Sec translocase complex, as well as at least some lipoproteins. Aids folding of multispanning membrane proteins. In Shigella dysenteriae serotype 1 (strain Sd197), this protein is Membrane protein insertase YidC.